Here is a 294-residue protein sequence, read N- to C-terminus: ATP synthase gamma chain (294 aa).

It belongs to the ATPase gamma chain family. As to quaternary structure, F-type ATPases have 2 components, CF(1) - the catalytic core - and CF(0) - the membrane proton channel. CF(1) has five subunits: alpha(3), beta(3), gamma(1), delta(1), epsilon(1). CF(0) has three main subunits: a, b and c.

The protein localises to the cell inner membrane. In terms of biological role, produces ATP from ADP in the presence of a proton gradient across the membrane. The gamma chain is believed to be important in regulating ATPase activity and the flow of protons through the CF(0) complex. In Campylobacter jejuni subsp. jejuni serotype O:23/36 (strain 81-176), this protein is ATP synthase gamma chain.